We begin with the raw amino-acid sequence, 215 residues long: MKLFIDTANIEEIREAYALGIICGVTTNPSLIAREGRNFAQVVREIAAIVDGPISAEAVSPDAAGMIAEAEELSSIHPNIVVKIPMTAEGLKAVKILAQKGIRTNVTLIFSANQALLAARAGASYVSPFVGRLDDVSQDGAALIYDIMEIFERHCIRTEVIAASIRHPVHVTMAAKAGAHIATVPYKVLMQMIGHPLTEAGIKKFLEDWEKVKDK.

The active-site Schiff-base intermediate with substrate is the Lys-83.

This sequence belongs to the transaldolase family. Type 3B subfamily.

It localises to the cytoplasm. The catalysed reaction is D-sedoheptulose 7-phosphate + D-glyceraldehyde 3-phosphate = D-erythrose 4-phosphate + beta-D-fructose 6-phosphate. It participates in carbohydrate degradation; pentose phosphate pathway; D-glyceraldehyde 3-phosphate and beta-D-fructose 6-phosphate from D-ribose 5-phosphate and D-xylulose 5-phosphate (non-oxidative stage): step 2/3. Functionally, transaldolase is important for the balance of metabolites in the pentose-phosphate pathway. In Pelotomaculum thermopropionicum (strain DSM 13744 / JCM 10971 / SI), this protein is Probable transaldolase.